The following is a 141-amino-acid chain: Nucleoside diphosphate kinase (141 aa).

Positions 11, 59, 87, 93, 104, and 114 each coordinate ATP. Residue histidine 117 is the Pros-phosphohistidine intermediate of the active site.

The protein belongs to the NDK family. Homotetramer. Mg(2+) is required as a cofactor.

It is found in the cytoplasm. It carries out the reaction a 2'-deoxyribonucleoside 5'-diphosphate + ATP = a 2'-deoxyribonucleoside 5'-triphosphate + ADP. The enzyme catalyses a ribonucleoside 5'-diphosphate + ATP = a ribonucleoside 5'-triphosphate + ADP. Its function is as follows. Major role in the synthesis of nucleoside triphosphates other than ATP. The ATP gamma phosphate is transferred to the NDP beta phosphate via a ping-pong mechanism, using a phosphorylated active-site intermediate. The chain is Nucleoside diphosphate kinase from Haemophilus influenzae (strain ATCC 51907 / DSM 11121 / KW20 / Rd).